Consider the following 683-residue polypeptide: MDDYRYRDNYEGYAPSDGYYRSNEQNQEEDAQSDVTEGHDEEDEIYEGEYQGIPHPDDVKSKQTKMAPSRADGLGGQADLMAERMEDEEELAHQYETIIDECGHGRFQWTLFFVLGLALMADGVEIFVVSFALPSAEKDMCLSSSKKGMLGLIVYLGMMAGAFILGGLADKLGRKKVLSMSLAINASFASLSSFVQGYGAFLFCRLISGIGIGGSLPIVFAYFSEFLSREKRGEHLSWLGIFWMTGGIYASAMAWSIIPHYGWGFSMGTNYHFHSWRVFVIVCALPATVSMVALKFMPESPRFLLEMGKHDEAWMILKQVHDTNMRAKGTPEKVFTVSHIKTPKQMDEFIEIQSSTGTWYQRWLVRFMTIFKQVWDNALYCVMGPYRMNTLILAVVWFTMALSYYGLTVWFPDMIRYFQDEEYKSKMKVFFGEHVHGATINFTMENQIHQHGKLVNDKFIKMYFKHVLFEDTFFDKCYFEDVTSTDTYFKNCTIESTTFYNTDLYKHKFINCRFINSTFLEQKEGCHMDFEEDNDFLIYLVSFLGSLSVLPGNIISALLMDRIGRLKMIGGSMLISAVCCFFLFFGNSESAMIGWQCLFCGTSIAAWNALDVITVELYPTNQRATAFGILNGLCKFGAILGNTIFASFVGITKVVPILLAAASLVGGGLIALRLPETREQVLM.

The span at 1–10 (MDDYRYRDNY) shows a compositional bias: basic and acidic residues. Positions 1-73 (MDDYRYRDNY…TKMAPSRADG (73 aa)) are disordered. Topologically, residues 1 to 110 (MDDYRYRDNY…ECGHGRFQWT (110 aa)) are cytoplasmic. Residue S33 is modified to Phosphoserine. T36 carries the phosphothreonine modification. A helical transmembrane segment spans residues 111 to 131 (LFFVLGLALMADGVEIFVVSF). Residues 132-148 (ALPSAEKDMCLSSSKKG) lie on the Extracellular side of the membrane. The chain crosses the membrane as a helical span at residues 149-169 (MLGLIVYLGMMAGAFILGGLA). At 170-182 (DKLGRKKVLSMSL) the chain is on the cytoplasmic side. Residues 183–203 (AINASFASLSSFVQGYGAFLF) traverse the membrane as a helical segment. Residues 204–205 (CR) are Extracellular-facing. The chain crosses the membrane as a helical span at residues 206–226 (LISGIGIGGSLPIVFAYFSEF). The Cytoplasmic portion of the chain corresponds to 227–237 (LSREKRGEHLS). Residues 238 to 258 (WLGIFWMTGGIYASAMAWSII) form a helical membrane-spanning segment. At 259–277 (PHYGWGFSMGTNYHFHSWR) the chain is on the extracellular side. Residues 278 to 298 (VFVIVCALPATVSMVALKFMP) traverse the membrane as a helical segment. The Cytoplasmic portion of the chain corresponds to 299 to 390 (ESPRFLLEMG…CVMGPYRMNT (92 aa)). Residues 391 to 411 (LILAVVWFTMALSYYGLTVWF) form a helical membrane-spanning segment. The Extracellular segment spans residues 412 to 535 (PDMIRYFQDE…CHMDFEEDND (124 aa)). Y423 bears the Phosphotyrosine mark. N-linked (GlcNAc...) asparagine glycans are attached at residues N441, N491, and N516. The chain crosses the membrane as a helical span at residues 536-556 (FLIYLVSFLGSLSVLPGNIIS). Over 557–565 (ALLMDRIGR) the chain is Cytoplasmic. Residues 566–586 (LKMIGGSMLISAVCCFFLFFG) traverse the membrane as a helical segment. Residues 587 to 592 (NSESAM) lie on the Extracellular side of the membrane. Residues 593 to 613 (IGWQCLFCGTSIAAWNALDVI) form a helical membrane-spanning segment. The Cytoplasmic portion of the chain corresponds to 614–626 (TVELYPTNQRATA). Residues 627-649 (FGILNGLCKFGAILGNTIFASFV) traverse the membrane as a helical segment. Topologically, residues 650 to 653 (GITK) are extracellular. Residues 654–672 (VVPILLAAASLVGGGLIAL) traverse the membrane as a helical segment. Over 673–683 (RLPETREQVLM) the chain is Cytoplasmic.

The protein belongs to the major facilitator superfamily. As to quaternary structure, interacts with SYT1 in a calcium-independent manner. Forms a complex with SYT1, syntaxin-1 and SNAP25. In terms of assembly, (Microbial infection) Interacts with C.botulinum neurotoxin type A (BoNT/A, botA). (Microbial infection) Interacts with C.botulinum neurotoxin type D (BoNT/D, botD). No evidence for its interaction with BoNT/D has also been published. In terms of processing, N-glycosylated. The N-terminal cytoplasmic domain is phosphorylated by CK1. Expressed in ribbon synapses of the retina (at protein level). Expressed in diaphragm motor nerve terminals (at protein level). Expressed in hippocampus neurons (at protein level).

It is found in the cytoplasmic vesicle. It localises to the secretory vesicle. Its subcellular location is the synaptic vesicle membrane. The protein localises to the acrosome. Its function is as follows. Probably plays a role in the control of regulated secretion in neural and endocrine cells. (Microbial infection) Receptor for C.botulinum neurotoxin type A (BoNT/A, botA); the toxin probably binds via extracellular loop 4. In terms of biological role, (Microbial infection) Possible receptor for C.botulinum neurotoxin type D (BoNT/D, botD). Not a receptor for C.botulinum neurotoxin type D (BoNT/D, botD). Functionally, (Microbial infection) Receptor for C.botulinum neurotoxin type E (BoNT/E); the toxin probably binds via extracellular loop 4. It probably requires glycosylation of Asn-516. The chain is Synaptic vesicle glycoprotein 2B (Sv2b) from Mus musculus (Mouse).